A 166-amino-acid polypeptide reads, in one-letter code: Protein-export protein SecB (166 aa).

It belongs to the SecB family. Homotetramer, a dimer of dimers. One homotetramer interacts with 1 SecA dimer.

It localises to the cytoplasm. Functionally, one of the proteins required for the normal export of preproteins out of the cell cytoplasm. It is a molecular chaperone that binds to a subset of precursor proteins, maintaining them in a translocation-competent state. It also specifically binds to its receptor SecA. This chain is Protein-export protein SecB, found in Actinobacillus succinogenes (strain ATCC 55618 / DSM 22257 / CCUG 43843 / 130Z).